Here is a 135-residue protein sequence, read N- to C-terminus: Large ribosomal subunit protein uL16c (135 aa).

The protein belongs to the universal ribosomal protein uL16 family. In terms of assembly, part of the 50S ribosomal subunit.

The protein resides in the plastid. It is found in the chloroplast. This is Large ribosomal subunit protein uL16c from Daucus carota (Wild carrot).